The following is a 318-amino-acid chain: MANTLEQLKSYTTIVADTGDIEAIKRYQPEDATTNPSLILKAAQIPEYSALIDNAIAWAKLQSTDIEQQIDDASDKLAVNIGVEILKLVPGRISTEVDARLSFDKEKSIAKAHKLVRLYQEAGVDKSRILIKLASTWEGICAAKELEQEGINCNLTLLFSFSQARACAEAGVYLISPFVGRILDWYKKDTGKDYDAVNDPGVVSVTEIYNYYKQHGYNTVVMGASFRNIGEIIELAGCDRLTIGPSLLEELANSQLAIQPKLVPTSTTVAVAEPLTEAQFRWEFNQDAMAVDKLAEGIRNFAIDQGKLEVMLKAKLAN.

K132 (schiff-base intermediate with substrate) is an active-site residue.

Belongs to the transaldolase family. Type 1 subfamily. In terms of assembly, homodimer.

The protein resides in the cytoplasm. The catalysed reaction is D-sedoheptulose 7-phosphate + D-glyceraldehyde 3-phosphate = D-erythrose 4-phosphate + beta-D-fructose 6-phosphate. It participates in carbohydrate degradation; pentose phosphate pathway; D-glyceraldehyde 3-phosphate and beta-D-fructose 6-phosphate from D-ribose 5-phosphate and D-xylulose 5-phosphate (non-oxidative stage): step 2/3. Functionally, transaldolase is important for the balance of metabolites in the pentose-phosphate pathway. The chain is Transaldolase from Shewanella oneidensis (strain ATCC 700550 / JCM 31522 / CIP 106686 / LMG 19005 / NCIMB 14063 / MR-1).